An 85-amino-acid polypeptide reads, in one-letter code: MKVTLIAILTCAAVLVLHTTAAEELEAESQLMEVGMPDTELAAVDEERLFECSVSCEIEKEDNKDCKKKKCKGGWKCKFNMCVKV.

Residues 1–22 (MKVTLIAILTCAAVLVLHTTAA) form the signal peptide. The propeptide occupies 23–48 (EELEAESQLMEVGMPDTELAAVDEER). Disulfide bonds link cysteine 52-cysteine 66, cysteine 56-cysteine 77, and cysteine 71-cysteine 82.

It belongs to the neurotoxin 12 (Hwtx-2) family. 02 (Hwtx-2) subfamily. Expressed by the venom gland.

Its subcellular location is the secreted. In terms of biological role, postsynaptic neurotoxin. The protein is U4-theraphotoxin-Hhn1g of Cyriopagopus hainanus (Chinese bird spider).